The following is a 254-amino-acid chain: 3-dehydroquinate dehydratase (254 aa).

3-dehydroquinate-binding positions include 47-49 (EFR) and Arg83. Residue His144 is the Proton donor/acceptor of the active site. The active-site Schiff-base intermediate with substrate is the Lys171. 3 residues coordinate 3-dehydroquinate: Arg213, Ser232, and Gln236.

It belongs to the type-I 3-dehydroquinase family. Homodimer.

It catalyses the reaction 3-dehydroquinate = 3-dehydroshikimate + H2O. It functions in the pathway metabolic intermediate biosynthesis; chorismate biosynthesis; chorismate from D-erythrose 4-phosphate and phosphoenolpyruvate: step 3/7. Involved in the third step of the chorismate pathway, which leads to the biosynthesis of aromatic amino acids. Catalyzes the cis-dehydration of 3-dehydroquinate (DHQ) and introduces the first double bond of the aromatic ring to yield 3-dehydroshikimate. The protein is 3-dehydroquinate dehydratase of Neisseria meningitidis serogroup C / serotype 2a (strain ATCC 700532 / DSM 15464 / FAM18).